Here is a 625-residue protein sequence, read N- to C-terminus: uncharacterized protein (625 aa).

A DNA-binding region (zn(2)-C6 fungal-type) is located at residues 23–51 (CLACRRKKLKCDHGRPCSNCLKRSTIQSC). A compositionally biased stretch (polar residues) spans 93-113 (GTKSQSDYENQQSHNLPSTPS). The segment at 93–119 (GTKSQSDYENQQSHNLPSTPSADAETQ) is disordered.

It localises to the nucleus. The protein resides in the cytoplasm. Its subcellular location is the cytoskeleton. It is found in the spindle. This is an uncharacterized protein from Schizosaccharomyces pombe (strain 972 / ATCC 24843) (Fission yeast).